A 408-amino-acid chain; its full sequence is Aminoacylase-1 (408 aa).

Residue His-80 participates in Zn(2+) binding. Asp-82 is an active-site residue. A Zn(2+)-binding site is contributed by Asp-113. The active-site Proton acceptor is the Glu-147. The Zn(2+) site is built by Glu-148, Glu-175, and His-373.

The protein belongs to the peptidase M20A family. Homodimer. Interacts with SPHK1. It depends on Zn(2+) as a cofactor.

It is found in the cytoplasm. It carries out the reaction an N-acyl-L-amino acid + H2O = an L-alpha-amino acid + a carboxylate. The enzyme catalyses N-acetyl-L-methionine + H2O = L-methionine + acetate. The catalysed reaction is N-acetyl-L-glutamine + H2O = L-glutamine + acetate. In terms of biological role, catalyzes the hydrolysis of N-acetylated amino acids to acetate and free amino acids. This Mus musculus (Mouse) protein is Aminoacylase-1 (Acy1).